Here is a 532-residue protein sequence, read N- to C-terminus: Polyadenylation factor subunit 2 (532 aa).

A disordered region spans residues 50 to 72; the sequence is AGYQPRQQPQGEEDRRPAHRRTV. Basic and acidic residues predominate over residues 61 to 72; sequence EEDRRPAHRRTV. 7 WD repeats span residues 143–182, 185–224, 227–266, 270–309, 312–353, 376–416, and 432–471; these read KVRH…FESI, AHES…VNVI, AHRE…NAES, GHGW…NVNT, GFKN…SGSS, GHDS…AGGA, and AHDY…DPTS. Residues 513-532 form a disordered region; sequence NTAQPEVTDDEPVSIPGFAR.

The protein resides in the nucleus. Functionally, required for 3'-end cleavage and polyadenylation of pre-mRNAs. Also involved in chromosome segregation where it has a role in chromosome attachment to the mitotic spindle. This is Polyadenylation factor subunit 2 (PFS2) from Yarrowia lipolytica (strain CLIB 122 / E 150) (Yeast).